A 610-amino-acid chain; its full sequence is Elongation factor 4 (610 aa).

The tr-type G domain occupies 11-193 (ENIRNFSIIA…QIVEKVPAPS (183 aa)). Residues 23–28 (DHGKST) and 140–143 (NKID) each bind GTP.

The protein belongs to the TRAFAC class translation factor GTPase superfamily. Classic translation factor GTPase family. LepA subfamily.

It localises to the cell membrane. The catalysed reaction is GTP + H2O = GDP + phosphate + H(+). Required for accurate and efficient protein synthesis under certain stress conditions. May act as a fidelity factor of the translation reaction, by catalyzing a one-codon backward translocation of tRNAs on improperly translocated ribosomes. Back-translocation proceeds from a post-translocation (POST) complex to a pre-translocation (PRE) complex, thus giving elongation factor G a second chance to translocate the tRNAs correctly. Binds to ribosomes in a GTP-dependent manner. The sequence is that of Elongation factor 4 from Streptococcus equi subsp. equi (strain 4047).